Here is a 293-residue protein sequence, read N- to C-terminus: Homoserine kinase (293 aa).

Residue Pro-84–Ala-94 coordinates ATP.

Belongs to the GHMP kinase family. Homoserine kinase subfamily.

It localises to the cytoplasm. The enzyme catalyses L-homoserine + ATP = O-phospho-L-homoserine + ADP + H(+). The protein operates within amino-acid biosynthesis; L-threonine biosynthesis; L-threonine from L-aspartate: step 4/5. Catalyzes the ATP-dependent phosphorylation of L-homoserine to L-homoserine phosphate. This Aliarcobacter butzleri (strain RM4018) (Arcobacter butzleri) protein is Homoserine kinase.